The chain runs to 255 residues: Ribosomal RNA small subunit methyltransferase A (255 aa).

Residues asparagine 11, leucine 13, glycine 38, glutamate 59, aspartate 83, and asparagine 101 each coordinate S-adenosyl-L-methionine.

It belongs to the class I-like SAM-binding methyltransferase superfamily. rRNA adenine N(6)-methyltransferase family. RsmA subfamily.

It localises to the cytoplasm. It carries out the reaction adenosine(1518)/adenosine(1519) in 16S rRNA + 4 S-adenosyl-L-methionine = N(6)-dimethyladenosine(1518)/N(6)-dimethyladenosine(1519) in 16S rRNA + 4 S-adenosyl-L-homocysteine + 4 H(+). Its function is as follows. Specifically dimethylates two adjacent adenosines (A1518 and A1519) in the loop of a conserved hairpin near the 3'-end of 16S rRNA in the 30S particle. May play a critical role in biogenesis of 30S subunits. This is Ribosomal RNA small subunit methyltransferase A from Thiobacillus denitrificans (strain ATCC 25259 / T1).